Here is a 544-residue protein sequence, read N- to C-terminus: Tyrosyl-DNA phosphodiesterase 1 (544 aa).

The Nucleophile role is filled by histidine 182. Residue lysine 184 participates in substrate binding. The interval 312–316 is interaction with DNA; sequence SIGTS. The active-site Proton donor/acceptor is the histidine 432. Lysine 434 serves as a coordination point for substrate.

It belongs to the tyrosyl-DNA phosphodiesterase family.

The protein resides in the nucleus. Its function is as follows. DNA repair enzyme that can remove a variety of covalent adducts from DNA through hydrolysis of a 3'-phosphodiester bond, giving rise to DNA with a free 3' phosphate. Catalyzes the hydrolysis of dead-end complexes between DNA and the topoisomerase I active site tyrosine residue. Hydrolyzes 3'-phosphoglycolates on protruding 3' ends on DNA double-strand breaks due to DNA damage by radiation and free radicals. Also cleaves 5' phosphotyrosyl adducts resulting from dead-end complexes between DNA and the active site tyrosine of topoisomerase II. Contributes to DNA repair after radiation damage. Acts on blunt-ended double-strand DNA breaks and on single-stranded DNA. May have low 3'exonuclease activity and may be able to remove a single nucleoside from the 3'end of DNA and RNA molecules with 3'hydroxyl groups. Has no exonuclease activity towards DNA or RNA with a 3'phosphate. In Saccharomyces cerevisiae (strain ATCC 204508 / S288c) (Baker's yeast), this protein is Tyrosyl-DNA phosphodiesterase 1 (TDP1).